The chain runs to 252 residues: Triosephosphate isomerase (252 aa).

10–12 (NWK) is a binding site for substrate. The active-site Electrophile is the His96. The active-site Proton acceptor is the Glu168. Substrate contacts are provided by residues Gly174, Ser214, and 235–236 (GG).

Belongs to the triosephosphate isomerase family. Homodimer.

The protein resides in the cytoplasm. The catalysed reaction is D-glyceraldehyde 3-phosphate = dihydroxyacetone phosphate. Its pathway is carbohydrate biosynthesis; gluconeogenesis. The protein operates within carbohydrate degradation; glycolysis; D-glyceraldehyde 3-phosphate from glycerone phosphate: step 1/1. In terms of biological role, involved in the gluconeogenesis. Catalyzes stereospecifically the conversion of dihydroxyacetone phosphate (DHAP) to D-glyceraldehyde-3-phosphate (G3P). This is Triosephosphate isomerase from Streptococcus pneumoniae serotype 2 (strain D39 / NCTC 7466).